Here is a 490-residue protein sequence, read N- to C-terminus: 3-octaprenyl-4-hydroxybenzoate carboxy-lyase (490 aa).

N172 lines the Mn(2+) pocket. Residues 175–177, 189–191, and 194–195 each bind prenylated FMN; these read IYR, RWL, and RG. A Mn(2+)-binding site is contributed by E238. The active-site Proton donor is the D287.

This sequence belongs to the UbiD family. As to quaternary structure, homohexamer. It depends on prenylated FMN as a cofactor. Mn(2+) is required as a cofactor.

Its subcellular location is the cell membrane. The catalysed reaction is a 4-hydroxy-3-(all-trans-polyprenyl)benzoate + H(+) = a 2-(all-trans-polyprenyl)phenol + CO2. It participates in cofactor biosynthesis; ubiquinone biosynthesis. Catalyzes the decarboxylation of 3-octaprenyl-4-hydroxy benzoate to 2-octaprenylphenol, an intermediate step in ubiquinone biosynthesis. The sequence is that of 3-octaprenyl-4-hydroxybenzoate carboxy-lyase from Saccharophagus degradans (strain 2-40 / ATCC 43961 / DSM 17024).